The primary structure comprises 198 residues: Proteasome subunit beta 1 (198 aa).

Positions 1–6 (MSGPGA) are cleaved as a propeptide — removed in mature form; by autocatalysis. T7 (nucleophile) is an active-site residue.

This sequence belongs to the peptidase T1B family. The 20S proteasome core is composed of 14 alpha and 14 beta subunits that assemble into four stacked heptameric rings, resulting in a barrel-shaped structure. The two inner rings, each composed of seven catalytic beta subunits, are sandwiched by two outer rings, each composed of seven alpha subunits. The catalytic chamber with the active sites is on the inside of the barrel. Has a gated structure, the ends of the cylinder being occluded by the N-termini of the alpha-subunits. Is capped at one or both ends by the proteasome regulatory ATPase, PAN.

The protein resides in the cytoplasm. The catalysed reaction is Cleavage of peptide bonds with very broad specificity.. With respect to regulation, the formation of the proteasomal ATPase PAN-20S proteasome complex, via the docking of the C-termini of PAN into the intersubunit pockets in the alpha-rings, triggers opening of the gate for substrate entry. Interconversion between the open-gate and close-gate conformations leads to a dynamic regulation of the 20S proteasome proteolysis activity. Functionally, component of the proteasome core, a large protease complex with broad specificity involved in protein degradation. The polypeptide is Proteasome subunit beta 1 (Ignicoccus hospitalis (strain KIN4/I / DSM 18386 / JCM 14125)).